The primary structure comprises 396 residues: Na(+)/H(+) antiporter NhaA 1 (396 aa).

11 helical membrane-spanning segments follow: residues 18–38 (LLLI…LSWL), 60–80 (LLLW…GLEV), 95–115 (IALP…IYTG), 126–146 (GWAI…ALLG), 155–175 (LFLL…IALF), 178–198 (ADLS…LFIL), 201–221 (TGVT…ICVL), 262–282 (VAYG…LAGI), 295–315 (IAAG…WIGV), 333–353 (GMAV…TLAL), and 362–382 (AARL…YYLL).

It belongs to the NhaA Na(+)/H(+) (TC 2.A.33) antiporter family.

It is found in the cell inner membrane. It catalyses the reaction Na(+)(in) + 2 H(+)(out) = Na(+)(out) + 2 H(+)(in). Its function is as follows. Na(+)/H(+) antiporter that extrudes sodium in exchange for external protons. The sequence is that of Na(+)/H(+) antiporter NhaA 1 from Syntrophotalea carbinolica (strain DSM 2380 / NBRC 103641 / GraBd1) (Pelobacter carbinolicus).